A 332-amino-acid chain; its full sequence is Putative integrase/recombinase y4rC (332 aa).

The 94-residue stretch at 5–98 (ASLAPLLESF…AIHSFFRYAA (94 aa)) folds into the Core-binding (CB) domain. A Tyr recombinase domain is found at 122–307 (TLVNFLTRPE…TLAMKEAALA (186 aa)). Residues R162, K187, H259, R262, and H285 contribute to the active site. Catalysis depends on Y294, which acts as the O-(3'-phospho-DNA)-tyrosine intermediate.

It belongs to the 'phage' integrase family.

In Sinorhizobium fredii (strain NBRC 101917 / NGR234), this protein is Putative integrase/recombinase y4rC.